A 538-amino-acid polypeptide reads, in one-letter code: DALR anticodon-binding domain-containing protein 3 (538 aa).

As to quaternary structure, part of a complex containing tRNA(Arg) and METTL2. Interacts with tRNA(Arg)(CCU) and tRNA(Arg)(UCU). Interacts with METTL2.

In terms of biological role, involved in tRNA methylation. Facilitates the recognition and targeting of tRNA(Arg)(CCU) and tRNA(Arg)(UCU) substrates for N(3)-methylcytidine modification by METTL2. This Mus musculus (Mouse) protein is DALR anticodon-binding domain-containing protein 3 (Dalrd3).